Reading from the N-terminus, the 397-residue chain is Acetate kinase (397 aa).

Mg(2+) is bound at residue Asn-8. Residue Lys-15 participates in ATP binding. Position 89 (Arg-89) interacts with substrate. Asp-146 (proton donor/acceptor) is an active-site residue. ATP-binding positions include 206-210 (HIGNG), 281-283 (DLR), and 328-332 (GVGEN). Mg(2+) is bound at residue Glu-381.

It belongs to the acetokinase family. Homodimer. Mg(2+) is required as a cofactor. The cofactor is Mn(2+).

The protein localises to the cytoplasm. The enzyme catalyses acetate + ATP = acetyl phosphate + ADP. The protein operates within metabolic intermediate biosynthesis; acetyl-CoA biosynthesis; acetyl-CoA from acetate: step 1/2. In terms of biological role, catalyzes the formation of acetyl phosphate from acetate and ATP. Can also catalyze the reverse reaction. This Oceanobacillus iheyensis (strain DSM 14371 / CIP 107618 / JCM 11309 / KCTC 3954 / HTE831) protein is Acetate kinase.